The chain runs to 457 residues: Flavohemoprotein-2 (457 aa).

One can recognise a Globin domain in the interval 2–157 (ALSEDTIKAV…LADLLIKREE (156 aa)). Residue H106 participates in heme b binding. Catalysis depends on charge relay system residues Y116 and E156. Positions 168–456 (GGWRQTRTFR…FEMFGPFKAS (289 aa)) are reductase. One can recognise an FAD-binding FR-type domain in the interval 171–278 (RQTRTFRVEE…APPYGDFFLR (108 aa)). FAD-binding positions include Y210 and 227–230 (RQYS). 320-325 (GIGQTP) provides a ligand contact to NADP(+). 449-452 (MFGP) serves as a coordination point for FAD.

It belongs to the globin family. Two-domain flavohemoproteins subfamily. This sequence in the C-terminal section; belongs to the flavoprotein pyridine nucleotide cytochrome reductase family. Monomer. Requires heme b as cofactor. FAD is required as a cofactor.

The enzyme catalyses 2 nitric oxide + NADPH + 2 O2 = 2 nitrate + NADP(+) + H(+). It catalyses the reaction 2 nitric oxide + NADH + 2 O2 = 2 nitrate + NAD(+) + H(+). In terms of biological role, flavohemoprotein involved in nitric oxide (NO) detoxification in an aerobic process, termed nitric oxide dioxygenase (NOD) reaction that utilizes O(2) and NAD(P)H to convert NO to nitrate, which protects the protozoan parasite from various noxious nitrogen compounds. Therefore, plays a central role in the inducible response to nitrosative stress. May also be involved in O(2) detoxification. The protein is Flavohemoprotein-2 (hmpA-2) of Giardia intestinalis (strain P15) (Giardia lamblia).